Reading from the N-terminus, the 641-residue chain is DNA mismatch repair protein MutL (641 aa).

A disordered region spans residues 345-445; the sequence is PAAVAPPAPA…GDTSLGDTSP (101 aa). Residues 419–429 are compositionally biased toward basic and acidic residues; it reads PRTEPATRTGE. The segment covering 432 to 442 has biased composition (polar residues); it reads GISSGDTSLGD.

The protein belongs to the DNA mismatch repair MutL/HexB family.

In terms of biological role, this protein is involved in the repair of mismatches in DNA. It is required for dam-dependent methyl-directed DNA mismatch repair. May act as a 'molecular matchmaker', a protein that promotes the formation of a stable complex between two or more DNA-binding proteins in an ATP-dependent manner without itself being part of a final effector complex. The chain is DNA mismatch repair protein MutL from Azotobacter vinelandii (strain DJ / ATCC BAA-1303).